We begin with the raw amino-acid sequence, 350 residues long: Small ribosomal subunit biogenesis GTPase RsgA (350 aa).

Residues 1 to 17 (MSKNKLSKGQQRRVNAN) show a composition bias toward polar residues. The disordered stretch occupies residues 1–27 (MSKNKLSKGQQRRVNANHQRRLKTSAE). The region spanning 104–273 (TSVLTRPDFY…VIDSPGVREF (170 aa)) is the CP-type G domain. Residues 160–163 (NKID) and 214–222 (GQSGVGKSS) each bind GTP. 4 residues coordinate Zn(2+): C297, C302, H304, and C310.

This sequence belongs to the TRAFAC class YlqF/YawG GTPase family. RsgA subfamily. Monomer. Associates with 30S ribosomal subunit, binds 16S rRNA. Zn(2+) serves as cofactor.

The protein resides in the cytoplasm. In terms of biological role, one of several proteins that assist in the late maturation steps of the functional core of the 30S ribosomal subunit. Helps release RbfA from mature subunits. May play a role in the assembly of ribosomal proteins into the subunit. Circularly permuted GTPase that catalyzes slow GTP hydrolysis, GTPase activity is stimulated by the 30S ribosomal subunit. This Salmonella dublin (strain CT_02021853) protein is Small ribosomal subunit biogenesis GTPase RsgA.